The chain runs to 944 residues: MTTLASSYDPSSFESRLYAQWEAAGYFVPSGKGEPYTVLLPPPNVTGTLHMGHAFQQTLMDALVRYHRMRGYDTLWQVGTDHAGIATEMVVSRNLALEGKGQTRDSLGREGFIAKVWEWKAESGDTIERQMRRLGTSSDWSRSTFTMDPQPSAAVNEAFVRWYEQGLIYRGQRLVNWDPVLKTAISDLEVENVEEDGFLWSIRYPLADDVSYEHVEHDADGNETLRETRDYLVVATTRPETMLGDTAVMLHPEDARYLTLHNARIVLPLTGRHVPVITDDYVDRAFGTGVVKVTPAHDFNDYQVGVRHDLPLINLFTVTATINENAPERYRGLDRYDARKLVLSELEDLGVLVETKPHKLQVPRGDRTGQVIEPYLTDQWFVKMDALAKRGLELVESGQIKFVPPNWINTYRHWMENIQDWCISRQLWWGHRIPAWFDDAGKCYVGHDEAEVRAKHGLGAEIALHQDSDVLETWFSSQLWPFSTLGWPDAQAMAERGFGRYLPSSVLVTGFDIIFFWVARMIMATDSFTGQVPFRDVYITGLIRDAQGQKMSKSKGNVLDPLDIIDGISIEDLVAKRTSGLMKPKDAPKIEKATRKEFPDGIIAHGADALRFTIAALATHGRDIKFDLGRAEGYKNFCNKLWNATRFVLMNSEGARFTGVPQPRTEAEKWILARLDKVTAETHAHYANYRFDLLAQSLYEFAWNAFCDWFVELAKPALNHQDADAAASTRHTLLFVLESLLRLLHPLTPFVTEELWQQVAPRLGITTATISLQSFPQPGDVDTGSYASAEADVEWLKSMVSALRRVRSELNVPPSKQVRLLLQAGTADDRPRVARFASQLSFLLKLESIDWLDAGQDTPPSAAAIVGELTLLVPLEGLVDMDAERTRLDKEIRRVEGEIGKCNGKLGSATFVQNAPAAVVEQERARLNDWTTQLTGLREQRAKI.

The short motif at 43–53 is the 'HIGH' region element; it reads PNVTGTLHMGH. Residues 550–554 carry the 'KMSKS' region motif; sequence KMSKS. Lys-553 contributes to the ATP binding site. Positions 878–942 form a coiled coil; sequence LVDMDAERTR…QLTGLREQRA (65 aa).

Belongs to the class-I aminoacyl-tRNA synthetase family. ValS type 1 subfamily. In terms of assembly, monomer.

It localises to the cytoplasm. It carries out the reaction tRNA(Val) + L-valine + ATP = L-valyl-tRNA(Val) + AMP + diphosphate. Its function is as follows. Catalyzes the attachment of valine to tRNA(Val). As ValRS can inadvertently accommodate and process structurally similar amino acids such as threonine, to avoid such errors, it has a 'posttransfer' editing activity that hydrolyzes mischarged Thr-tRNA(Val) in a tRNA-dependent manner. The chain is Valine--tRNA ligase from Xanthomonas axonopodis pv. citri (strain 306).